Here is a 369-residue protein sequence, read N- to C-terminus: UDP-N-acetylglucosamine--N-acetylmuramyl-(pentapeptide) pyrophosphoryl-undecaprenol N-acetylglucosamine transferase (369 aa).

UDP-N-acetyl-alpha-D-glucosamine-binding positions include 10–12 (TGG), Asn124, Arg166, Ser196, and Gln300.

It belongs to the glycosyltransferase 28 family. MurG subfamily.

The protein localises to the cell membrane. It carries out the reaction di-trans,octa-cis-undecaprenyl diphospho-N-acetyl-alpha-D-muramoyl-L-alanyl-D-glutamyl-meso-2,6-diaminopimeloyl-D-alanyl-D-alanine + UDP-N-acetyl-alpha-D-glucosamine = di-trans,octa-cis-undecaprenyl diphospho-[N-acetyl-alpha-D-glucosaminyl-(1-&gt;4)]-N-acetyl-alpha-D-muramoyl-L-alanyl-D-glutamyl-meso-2,6-diaminopimeloyl-D-alanyl-D-alanine + UDP + H(+). It participates in cell wall biogenesis; peptidoglycan biosynthesis. Functionally, cell wall formation. Catalyzes the transfer of a GlcNAc subunit on undecaprenyl-pyrophosphoryl-MurNAc-pentapeptide (lipid intermediate I) to form undecaprenyl-pyrophosphoryl-MurNAc-(pentapeptide)GlcNAc (lipid intermediate II). The sequence is that of UDP-N-acetylglucosamine--N-acetylmuramyl-(pentapeptide) pyrophosphoryl-undecaprenol N-acetylglucosamine transferase from Desulfitobacterium hafniense (strain DSM 10664 / DCB-2).